The sequence spans 111 residues: Dynein light chain Tctex-type (111 aa).

The protein belongs to the dynein light chain Tctex-type family.

It localises to the cytoplasm. Its subcellular location is the cytoskeleton. Acts as a non-catalytic accessory component of a dynein complex. This Schizosaccharomyces pombe (strain 972 / ATCC 24843) (Fission yeast) protein is Dynein light chain Tctex-type (dlc1).